The sequence spans 474 residues: Gamma-aminobutyric acid receptor subunit beta-1 (474 aa).

An N-terminal signal peptide occupies residues 1 to 25 (MWTVQNRESLGLLSFPVMVAMVCCA). Topologically, residues 26–245 (HSSNEPSNMS…SFRLKRNIGY (220 aa)) are extracellular. 2 N-linked (GlcNAc...) asparagine glycosylation sites follow: Asn-33 and Asn-105. A histamine-binding site is contributed by Tyr-122. An intrachain disulfide couples Cys-161 to Cys-175. Residue Asn-174 is glycosylated (N-linked (GlcNAc...) asparagine). Residues 181 to 182 (SY) and Thr-227 contribute to the histamine site. Positions 182 and 227 each coordinate 4-aminobutanoate. Helical transmembrane passes span 246 to 267 (FILQ…SFWI), 271 to 293 (ASAA…STHL), and 305 to 327 (AIDI…YAFV). Topologically, residues 328–451 (NYIFFGKGPQ…DLTDVNSIDK (124 aa)) are cytoplasmic. The helical transmembrane segment at 452–473 (WSRMFFPITFSLFNVVYWLYYV) threads the bilayer.

The protein belongs to the ligand-gated ion channel (TC 1.A.9) family. Gamma-aminobutyric acid receptor (TC 1.A.9.5) subfamily. GABRB1 sub-subfamily. As to quaternary structure, heteropentamer, formed by a combination of alpha (GABRA1-6), beta (GABRB1-3), gamma (GABRG1-3), delta (GABRD), epsilon (GABRE), rho (GABRR1-3), pi (GABRP) and theta (GABRQ) chains, each subunit exhibiting distinct physiological and pharmacological properties. Binds UBQLN1.

Its subcellular location is the postsynaptic cell membrane. It localises to the cell membrane. It carries out the reaction chloride(in) = chloride(out). Its activity is regulated as follows. Potentiated by histamine. Functionally, beta subunit of the heteropentameric ligand-gated chloride channel gated by gamma-aminobutyric acid (GABA), a major inhibitory neurotransmitter in the brain. GABA-gated chloride channels, also named GABA(A) receptors (GABAAR), consist of five subunits arranged around a central pore and contain GABA active binding site(s) located at the alpha and beta subunit interface(s). When activated by GABA, GABAARs selectively allow the flow of chloride anions across the cell membrane down their electrochemical gradient. Chloride influx into the postsynaptic neuron following GABAAR opening decreases the neuron ability to generate a new action potential, thereby reducing nerve transmission. Beta-containing GABAARs can simultaneously bind GABA and histamine where histamine binds at the interface of two neighboring beta subunits, which may be involved in the regulation of sleep and wakefulness. This chain is Gamma-aminobutyric acid receptor subunit beta-1, found in Rattus norvegicus (Rat).